A 222-amino-acid polypeptide reads, in one-letter code: uncharacterized protein (222 aa).

One can recognise an HTH gntR-type domain in the interval 8–77; the sequence is AKKGQIIYRY…GNAGYFVAKN (70 aa).

This is an uncharacterized protein from Mycoplasma pneumoniae (strain ATCC 29342 / M129 / Subtype 1) (Mycoplasmoides pneumoniae).